Consider the following 168-residue polypeptide: Phosphopantetheine adenylyltransferase (168 aa).

Substrate is bound at residue Thr-14. ATP is bound by residues 14–15 and His-22; that span reads TF. Substrate-binding residues include Lys-46, Leu-78, and Arg-92. Residues 93-95, Glu-103, and 128-134 contribute to the ATP site; these read GLR and YSFISSS.

Belongs to the bacterial CoaD family. In terms of assembly, homohexamer. The cofactor is Mg(2+).

It localises to the cytoplasm. The catalysed reaction is (R)-4'-phosphopantetheine + ATP + H(+) = 3'-dephospho-CoA + diphosphate. Its pathway is cofactor biosynthesis; coenzyme A biosynthesis; CoA from (R)-pantothenate: step 4/5. Functionally, reversibly transfers an adenylyl group from ATP to 4'-phosphopantetheine, yielding dephospho-CoA (dPCoA) and pyrophosphate. The sequence is that of Phosphopantetheine adenylyltransferase from Xanthomonas euvesicatoria pv. vesicatoria (strain 85-10) (Xanthomonas campestris pv. vesicatoria).